A 514-amino-acid chain; its full sequence is Uridylate cyclase (514 aa).

Guanylate cyclase domains lie at 49 to 190 (VHMY…AKLA) and 286 to 428 (VSLY…EKRQ). A ribonucleoside 5'-triphosphate is bound by residues Y52, R105, F178, 184–188 (NHAAK), and 291–296 (DIDGFT). Ca(2+) is bound by residues D291, I292, and D339. Residue D291 coordinates Mn(2+). Positions 495 to 514 (IRADERQVQPHSRQKVDGSR) are disordered. Over residues 496-514 (RADERQVQPHSRQKVDGSR) the composition is skewed to basic and acidic residues.

It belongs to the adenylyl cyclase class-4/guanylyl cyclase family. Pyrimidine cyclase subfamily. As to quaternary structure, monomer. A divalent metal cation is required as a cofactor.

The protein resides in the cytoplasm. The enzyme catalyses UTP = 3',5'-cyclic UMP + diphosphate. Functionally, pycsar (pyrimidine cyclase system for antiphage resistance) provides immunity against bacteriophage. The pyrimidine cyclase (PycC) synthesizes cyclic nucleotides in response to infection; these serve as specific second messenger signals. The signals activate the adjacent effector, leading to bacterial cell death and abortive phage infection. A clade A Pycsar system. Its function is as follows. The pyrimidine cyclase gene of a two-gene Pycsar system, generates cyclic UMP (cUMP) from UTP, has little to no activity on ATP, CTP or GTP. Expression of this and adjacent effector PaPycTIR (AC P0DV41) probably confers resistance to bacteriophage. The genes are probably only expressed in response to bacteriophage infection. Does not have adenylyl or guanylyl cyclase activity. The sequence is that of Uridylate cyclase from Pseudomonas aeruginosa.